The sequence spans 380 residues: DNA replication and repair protein RecF (380 aa).

ATP is bound at residue 30–37 (GENAQGKT).

It belongs to the RecF family.

The protein resides in the cytoplasm. In terms of biological role, the RecF protein is involved in DNA metabolism; it is required for DNA replication and normal SOS inducibility. RecF binds preferentially to single-stranded, linear DNA. It also seems to bind ATP. The protein is DNA replication and repair protein RecF of Synechococcus sp. (strain JA-3-3Ab) (Cyanobacteria bacterium Yellowstone A-Prime).